The primary structure comprises 228 residues: Probable septum site-determining protein MinC (228 aa).

It belongs to the MinC family. As to quaternary structure, interacts with MinD and FtsZ.

Cell division inhibitor that blocks the formation of polar Z ring septums. Rapidly oscillates between the poles of the cell to destabilize FtsZ filaments that have formed before they mature into polar Z rings. Prevents FtsZ polymerization. This is Probable septum site-determining protein MinC from Pectobacterium carotovorum subsp. carotovorum (strain PC1).